Here is a 450-residue protein sequence, read N- to C-terminus: Na(+)/H(+) antiporter NhaA (450 aa).

The next 11 membrane-spanning stretches (helical) occupy residues 24–44 (FFAI…LALV), 75–95 (LILW…GLEI), 111–131 (ALPI…YLAL), 140–160 (GWGV…SLLG), 169–189 (VFLT…IAFF), 196–216 (FSFL…NWLG), 224–244 (LLVG…ATIA), 318–338 (WVAW…TVSA), 352–372 (IFFG…WLLV), 390–410 (GIGW…TLAF), and 422–442 (SILC…RVLL).

It belongs to the NhaA Na(+)/H(+) (TC 2.A.33) antiporter family.

Its subcellular location is the cell inner membrane. The enzyme catalyses Na(+)(in) + 2 H(+)(out) = Na(+)(out) + 2 H(+)(in). Na(+)/H(+) antiporter that extrudes sodium in exchange for external protons. The polypeptide is Na(+)/H(+) antiporter NhaA (Oleidesulfovibrio alaskensis (strain ATCC BAA-1058 / DSM 17464 / G20) (Desulfovibrio alaskensis)).